The following is a 119-amino-acid chain: Large ribosomal subunit protein bL20 (119 aa).

The protein belongs to the bacterial ribosomal protein bL20 family.

Binds directly to 23S ribosomal RNA and is necessary for the in vitro assembly process of the 50S ribosomal subunit. It is not involved in the protein synthesizing functions of that subunit. This is Large ribosomal subunit protein bL20 from Gloeobacter violaceus (strain ATCC 29082 / PCC 7421).